Here is a 239-residue protein sequence, read N- to C-terminus: Prolyl hydroxylase EGLN3 (239 aa).

The segment at 62–73 is beta(2)beta(3) 'finger-like' loop; it reads AGPRAGVSKRHL. A required for interaction with ADRB2 region spans residues 88-104; that stretch reads CEAISFLLSLIDRLVLY. The 99-residue stretch at 116-214 folds into the Fe2OG dioxygenase domain; it reads ERSKAMVACY…RYAMTVWYFD (99 aa). Positions 135, 137, and 196 each coordinate Fe cation. Arginine 205 is a binding site for 2-oxoglutarate.

Interacts with BCL2 (via its BH4 domain); the interaction disrupts the BAX-BCL4 complex inhibiting the anti-apoptotic activity of BCL2. Interacts with WDR83; the interaction leads to almost complete elimination of HIF-mediated reporter activity. Interacts with ADRB2; the interaction hydroxylates ADRB2 facilitating its ubiquitination by the VHL-E3 ligase complex. Interacts with PAX2; the interaction targets PAX2 for destruction. Interacts with PKM; the interaction hydroxylates PKM in hypoxia. Interacts with LIMD1, WTIP and AJUBA. Fe(2+) serves as cofactor. The cofactor is L-ascorbate. In terms of processing, ubiquitinated by SIAH1 and/or SIAH2 in response to the unfolded protein response (UPR), leading to its degradation. In terms of tissue distribution, widely expressed at low levels. Expressed at higher levels in adult heart (cardiac myocytes, aortic endothelial cells and coronary artery smooth muscle), lung and placenta, and in fetal spleen, heart and skeletal muscle. Also expressed in pancreas. Localized to pancreatic acini and islet cells.

It is found in the nucleus. Its subcellular location is the cytoplasm. It catalyses the reaction L-prolyl-[protein] + 2-oxoglutarate + O2 = trans-4-hydroxy-L-prolyl-[protein] + succinate + CO2. The enzyme catalyses L-prolyl-[hypoxia-inducible factor alpha subunit] + 2-oxoglutarate + O2 = trans-4-hydroxy-L-prolyl-[hypoxia-inducible factor alpha subunit] + succinate + CO2. Its activity is regulated as follows. Activated in cardiovascular cells and Hela cells following exposure to hypoxia. Inhibited by polynitrogen compounds probably by chelation to Fe(2+) ions. Functionally, prolyl hydroxylase that mediates hydroxylation of proline residues in target proteins, such as PKM, TELO2, ATF4 and HIF1A. Target proteins are preferentially recognized via a LXXLAP motif. Cellular oxygen sensor that catalyzes, under normoxic conditions, the post-translational formation of 4-hydroxyproline in hypoxia-inducible factor (HIF) alpha proteins. Hydroxylates a specific proline found in each of the oxygen-dependent degradation (ODD) domains (N-terminal, NODD, and C-terminal, CODD) of HIF1A. Also hydroxylates HIF2A. Has a preference for the CODD site for both HIF1A and HIF2A. Hydroxylation on the NODD site by EGLN3 appears to require prior hydroxylation on the CODD site. Hydroxylated HIFs are then targeted for proteasomal degradation via the von Hippel-Lindau ubiquitination complex. Under hypoxic conditions, the hydroxylation reaction is attenuated allowing HIFs to escape degradation resulting in their translocation to the nucleus, heterodimerization with HIF1B, and increased expression of hypoxy-inducible genes. ELGN3 is the most important isozyme in limiting physiological activation of HIFs (particularly HIF2A) in hypoxia. Also hydroxylates PKM in hypoxia, limiting glycolysis. Under normoxia, hydroxylates and regulates the stability of ADRB2. Regulator of cardiomyocyte and neuronal apoptosis. In cardiomyocytes, inhibits the anti-apoptotic effect of BCL2 by disrupting the BAX-BCL2 complex. In neurons, has a NGF-induced proapoptotic effect, probably through regulating CASP3 activity. Also essential for hypoxic regulation of neutrophilic inflammation. Plays a crucial role in DNA damage response (DDR) by hydroxylating TELO2, promoting its interaction with ATR which is required for activation of the ATR/CHK1/p53 pathway. Also mediates hydroxylation of ATF4, leading to decreased protein stability of ATF4. The polypeptide is Prolyl hydroxylase EGLN3 (Homo sapiens (Human)).